The chain runs to 386 residues: Caspase-12 (386 aa).

The 91-residue stretch at 1 to 91 (MAGKRQSQDP…LLSLKSHAEN (91 aa)) folds into the CARD domain. Ser-84 carries the phosphoserine modification. Active-site residues include His-218 and Cys-266.

Belongs to the peptidase C14A family. As to quaternary structure, heterotetramer that consists of two anti-parallel arranged heterodimers, each one formed by two subunits (Potential). May interact with TRAF2.

Functionally, involved in the activation cascade of caspases responsible for apoptosis execution. This Canis lupus familiaris (Dog) protein is Caspase-12.